The chain runs to 612 residues: Dihydroxy-acid dehydratase (612 aa).

D81 contacts Mg(2+). C122 is a binding site for [2Fe-2S] cluster. The Mg(2+) site is built by D123 and K124. K124 bears the N6-carboxylysine mark. C195 contacts [2Fe-2S] cluster. Mg(2+) is bound at residue E491. S517 acts as the Proton acceptor in catalysis.

Belongs to the IlvD/Edd family. In terms of assembly, homodimer. The cofactor is [2Fe-2S] cluster. Mg(2+) serves as cofactor.

It carries out the reaction (2R)-2,3-dihydroxy-3-methylbutanoate = 3-methyl-2-oxobutanoate + H2O. The catalysed reaction is (2R,3R)-2,3-dihydroxy-3-methylpentanoate = (S)-3-methyl-2-oxopentanoate + H2O. It functions in the pathway amino-acid biosynthesis; L-isoleucine biosynthesis; L-isoleucine from 2-oxobutanoate: step 3/4. It participates in amino-acid biosynthesis; L-valine biosynthesis; L-valine from pyruvate: step 3/4. Its function is as follows. Functions in the biosynthesis of branched-chain amino acids. Catalyzes the dehydration of (2R,3R)-2,3-dihydroxy-3-methylpentanoate (2,3-dihydroxy-3-methylvalerate) into 2-oxo-3-methylpentanoate (2-oxo-3-methylvalerate) and of (2R)-2,3-dihydroxy-3-methylbutanoate (2,3-dihydroxyisovalerate) into 2-oxo-3-methylbutanoate (2-oxoisovalerate), the penultimate precursor to L-isoleucine and L-valine, respectively. The sequence is that of Dihydroxy-acid dehydratase from Sinorhizobium medicae (strain WSM419) (Ensifer medicae).